Consider the following 248-residue polypeptide: Phosphoadenosine 5'-phosphosulfate reductase (248 aa).

Residue C239 is the Nucleophile; cysteine thiosulfonate intermediate of the active site.

It belongs to the PAPS reductase family. CysH subfamily.

The protein resides in the cytoplasm. The enzyme catalyses [thioredoxin]-disulfide + sulfite + adenosine 3',5'-bisphosphate + 2 H(+) = [thioredoxin]-dithiol + 3'-phosphoadenylyl sulfate. It functions in the pathway sulfur metabolism; hydrogen sulfide biosynthesis; sulfite from sulfate: step 3/3. Catalyzes the formation of sulfite from phosphoadenosine 5'-phosphosulfate (PAPS) using thioredoxin as an electron donor. This Alteromonas mediterranea (strain DSM 17117 / CIP 110805 / LMG 28347 / Deep ecotype) protein is Phosphoadenosine 5'-phosphosulfate reductase.